Reading from the N-terminus, the 207-residue chain is Large ribosomal subunit protein uL4 (207 aa).

A disordered region spans residues 44-77 (RRQGTHDTKTRSEVRGGGRKPWRQKGTGRARHGT). Residues 47–59 (GTHDTKTRSEVRG) are compositionally biased toward basic and acidic residues. Positions 60 to 77 (GGRKPWRQKGTGRARHGT) are enriched in basic residues.

Belongs to the universal ribosomal protein uL4 family. As to quaternary structure, part of the 50S ribosomal subunit.

Functionally, one of the primary rRNA binding proteins, this protein initially binds near the 5'-end of the 23S rRNA. It is important during the early stages of 50S assembly. It makes multiple contacts with different domains of the 23S rRNA in the assembled 50S subunit and ribosome. Forms part of the polypeptide exit tunnel. In Desulforudis audaxviator (strain MP104C), this protein is Large ribosomal subunit protein uL4.